We begin with the raw amino-acid sequence, 480 residues long: Glutamate--tRNA ligase (480 aa).

The 'HIGH' region motif lies at 9–19 (PSPTGDPHVGT). A 'KMSKS' region motif is present at residues 253 to 257 (KISKR). Lysine 256 lines the ATP pocket.

It belongs to the class-I aminoacyl-tRNA synthetase family. Glutamate--tRNA ligase type 1 subfamily. As to quaternary structure, monomer.

It localises to the cytoplasm. It carries out the reaction tRNA(Glu) + L-glutamate + ATP = L-glutamyl-tRNA(Glu) + AMP + diphosphate. Functionally, catalyzes the attachment of glutamate to tRNA(Glu) in a two-step reaction: glutamate is first activated by ATP to form Glu-AMP and then transferred to the acceptor end of tRNA(Glu). The chain is Glutamate--tRNA ligase from Deinococcus geothermalis (strain DSM 11300 / CIP 105573 / AG-3a).